A 306-amino-acid chain; its full sequence is Agmatinase (306 aa).

The Mn(2+) site is built by His126, Asp149, His151, Asp153, Asp230, and Asp232.

The protein belongs to the arginase family. Agmatinase subfamily. The cofactor is Mn(2+).

The catalysed reaction is agmatine + H2O = urea + putrescine. Its pathway is amine and polyamine biosynthesis; putrescine biosynthesis via agmatine pathway; putrescine from agmatine: step 1/1. Catalyzes the formation of putrescine from agmatine. In Escherichia coli (strain SE11), this protein is Agmatinase.